The chain runs to 538 residues: Chaperonin GroEL 1 (538 aa).

Residues Thr29–Pro32, Asp86–Thr90, Gly413, and Asp494 contribute to the ATP site.

It belongs to the chaperonin (HSP60) family. As to quaternary structure, forms a cylinder of 14 subunits composed of two heptameric rings stacked back-to-back. Interacts with the co-chaperonin GroES.

The protein resides in the cytoplasm. The catalysed reaction is ATP + H2O + a folded polypeptide = ADP + phosphate + an unfolded polypeptide.. Functionally, together with its co-chaperonin GroES, plays an essential role in assisting protein folding. The GroEL-GroES system forms a nano-cage that allows encapsulation of the non-native substrate proteins and provides a physical environment optimized to promote and accelerate protein folding. The chain is Chaperonin GroEL 1 from Mycolicibacterium paratuberculosis (strain ATCC BAA-968 / K-10) (Mycobacterium paratuberculosis).